The sequence spans 472 residues: Maintenance of mitochondrial morphology protein 1 (472 aa).

Over M1–G22 the chain is Lumenal. The chain crosses the membrane as a helical span at residues F23–F43. Residues G44–Q472 lie on the Cytoplasmic side of the membrane. 3 disordered regions span residues S51–S92, L270–S303, and R370–Q472. The segment covering S81–S92 has biased composition (polar residues). The SMP-LTD domain maps to Q124–P365. Residues L270 to P280 are compositionally biased toward pro residues. Over residues T281–D297 the composition is skewed to low complexity. Residues T450–H460 show a composition bias toward basic and acidic residues.

This sequence belongs to the MMM1 family. As to quaternary structure, homodimer. Component of the ER-mitochondria encounter structure (ERMES) or MDM complex, composed of mmm1, mdm10, mdm12 and mdm34. A mmm1 homodimer associates with one molecule of mdm12 on each side in a pairwise head-to-tail manner, and the SMP-LTD domains of mmm1 and mdm12 generate a continuous hydrophobic tunnel for phospholipid trafficking.

The protein resides in the endoplasmic reticulum membrane. Functionally, component of the ERMES/MDM complex, which serves as a molecular tether to connect the endoplasmic reticulum (ER) and mitochondria. Components of this complex are involved in the control of mitochondrial shape and protein biogenesis, and function in nonvesicular lipid trafficking between the ER and mitochondria. The mdm12-mmm1 subcomplex functions in the major beta-barrel assembly pathway that is responsible for biogenesis of all outer membrane beta-barrel proteins, and acts in a late step after the SAM complex. The mdm10-mdm12-mmm1 subcomplex further acts in the TOM40-specific pathway after the action of the mdm12-mmm1 complex. Essential for establishing and maintaining the structure of mitochondria and maintenance of mtDNA nucleoids. The chain is Maintenance of mitochondrial morphology protein 1 from Emericella nidulans (strain FGSC A4 / ATCC 38163 / CBS 112.46 / NRRL 194 / M139) (Aspergillus nidulans).